The chain runs to 150 residues: Ribosome-binding factor A (150 aa).

Residues 119-150 (VAERAKSAQPAGEPDPYRFDGAAAADDDEPAT) are disordered.

It belongs to the RbfA family. Monomer. Binds 30S ribosomal subunits, but not 50S ribosomal subunits or 70S ribosomes.

Its subcellular location is the cytoplasm. Functionally, one of several proteins that assist in the late maturation steps of the functional core of the 30S ribosomal subunit. Associates with free 30S ribosomal subunits (but not with 30S subunits that are part of 70S ribosomes or polysomes). Required for efficient processing of 16S rRNA. May interact with the 5'-terminal helix region of 16S rRNA. This is Ribosome-binding factor A from Acidothermus cellulolyticus (strain ATCC 43068 / DSM 8971 / 11B).